Reading from the N-terminus, the 273-residue chain is Probable nicotinate-nucleotide pyrophosphorylase [carboxylating] (273 aa).

Residues Arg-91, 124 to 126, Arg-148, Lys-158, Glu-188, Asp-209, 235 to 237, and 256 to 258 each bind substrate; these read TRK, SGN, and VGA.

This sequence belongs to the NadC/ModD family. Hexamer formed by 3 homodimers.

It carries out the reaction nicotinate beta-D-ribonucleotide + CO2 + diphosphate = quinolinate + 5-phospho-alpha-D-ribose 1-diphosphate + 2 H(+). It participates in cofactor biosynthesis; NAD(+) biosynthesis; nicotinate D-ribonucleotide from quinolinate: step 1/1. In terms of biological role, involved in the catabolism of quinolinic acid (QA). In Helicobacter pylori (strain J99 / ATCC 700824) (Campylobacter pylori J99), this protein is Probable nicotinate-nucleotide pyrophosphorylase [carboxylating] (nadC).